The chain runs to 463 residues: Glutamate--tRNA ligase 1 (463 aa).

Positions proline 10–glycine 20 match the 'HIGH' region motif. The 'KMSKS' region motif lies at lysine 238 to arginine 242. Lysine 241 serves as a coordination point for ATP.

Belongs to the class-I aminoacyl-tRNA synthetase family. Glutamate--tRNA ligase type 1 subfamily. In terms of assembly, monomer.

Its subcellular location is the cytoplasm. It catalyses the reaction tRNA(Glu) + L-glutamate + ATP = L-glutamyl-tRNA(Glu) + AMP + diphosphate. Catalyzes the attachment of glutamate to tRNA(Glu) in a two-step reaction: glutamate is first activated by ATP to form Glu-AMP and then transferred to the acceptor end of tRNA(Glu). The protein is Glutamate--tRNA ligase 1 of Helicobacter pylori (strain HPAG1).